A 405-amino-acid chain; its full sequence is uncharacterized protein (405 aa).

The next 12 helical transmembrane spans lie at 19–39 (IVSI…PLAV), 47–67 (VMGF…FATL), 85–105 (IVVF…TAGL), 107–127 (ASLP…LGIG), 156–176 (GIVT…FYHW), 178–198 (GLQA…LLAI), 224–244 (GMAL…ITLF), 252–272 (GAAF…LLFP), 283–303 (VAMI…VATM), 309–329 (IGVL…GVVA), 344–364 (TYTV…GLVM), and 366–386 (WAGV…ALLL).

Belongs to the major facilitator superfamily. YhhS family.

The protein localises to the cell inner membrane. This is an uncharacterized protein from Shigella flexneri.